The sequence spans 825 residues: AP-3 complex subunit delta (825 aa).

HEAT repeat units lie at residues Gly131–Glu168, Ala169–Lys205, Tyr207–Arg243, Leu244–His281, Asp285–Ser323, Leu324–Ile360, Ile363–Tyr400, Glu469–Arg513, Leu515–Glu547, and Lys548–Thr584. Residues Ser787–Glu825 form a disordered region. Over residues Glu807–Glu819 the composition is skewed to basic residues.

The protein belongs to the adaptor complexes large subunit family. As to quaternary structure, adaptor protein complex 3 (AP-3) is a heterotetramer composed of 2 large adaptins (apl5 and apl6), a medium adaptin (apm3) and a small adaptin (aps3).

The protein resides in the golgi apparatus. The protein localises to the cytoplasmic vesicle. It is found in the clathrin-coated vesicle membrane. Part of the AP-3 complex, an adaptor-related complex which is not clathrin-associated. The complex is associated with the Golgi region as well as more peripheral structures. It facilitates the budding of vesicles from the Golgi membrane and may be directly involved in trafficking to the vacuole. In Schizosaccharomyces pombe (strain 972 / ATCC 24843) (Fission yeast), this protein is AP-3 complex subunit delta (apl5).